The primary structure comprises 681 residues: Hydroxyproline O-galactosyltransferase GALT6 (681 aa).

The Cytoplasmic segment spans residues 1–28 (MRKPKLSKLERLEKFDIFVSLSKQRSVQ). The chain crosses the membrane as a helical; Signal-anchor for type II membrane protein span at residues 29–49 (ILMAVGLLYMLLITFEIPFVF). Topologically, residues 50–681 (KTGLSSLSQD…TGKPQCCNMR (632 aa)) are lumenal. The disordered stretch occupies residues 57–80 (SQDPLTRPEKHNSQRELQERRAPT). Basic and acidic residues predominate over residues 62-78 (TRPEKHNSQRELQERRA). The Galectin domain maps to 187-401 (NIMELPCGLT…DIDVHSVFAG (215 aa)). The N-linked (GlcNAc...) asparagine glycan is linked to Asn-629.

Belongs to the glycosyltransferase 31 family. The cofactor is Mn(2+). Expressed in junveile leaves and stems, and at lower levels in cauline leaves and siliques.

The protein localises to the golgi apparatus membrane. Its pathway is protein modification; protein glycosylation. Possesses hydroxyproline O-galactosyltransferase activity. Transfers galactose from UDP-galactose to hydroxyproline residues in the arabinogalactan proteins (AGPs). Is specific for AGPs containing non-contiguous peptidyl hydroxyproline residues. Utilizes UDP-galactose solely as sugar donor. The addition of galactose onto the peptidyl hydroxyproline residues in AGP core proteins represents the first committed step in arabinogalactan polysaccharide addition. AGP glycans play essential roles in both vegetative and reproductive plant growth. In Arabidopsis thaliana (Mouse-ear cress), this protein is Hydroxyproline O-galactosyltransferase GALT6.